The following is a 299-amino-acid chain: Bifunctional protein FolD 2 (299 aa).

This sequence belongs to the tetrahydrofolate dehydrogenase/cyclohydrolase family. As to quaternary structure, homodimer.

The catalysed reaction is (6R)-5,10-methylene-5,6,7,8-tetrahydrofolate + NADP(+) = (6R)-5,10-methenyltetrahydrofolate + NADPH. The enzyme catalyses (6R)-5,10-methenyltetrahydrofolate + H2O = (6R)-10-formyltetrahydrofolate + H(+). It functions in the pathway one-carbon metabolism; tetrahydrofolate interconversion. Its function is as follows. Catalyzes the oxidation of 5,10-methylenetetrahydrofolate to 5,10-methenyltetrahydrofolate and then the hydrolysis of 5,10-methenyltetrahydrofolate to 10-formyltetrahydrofolate. This Arabidopsis thaliana (Mouse-ear cress) protein is Bifunctional protein FolD 2 (FOLD2).